The primary structure comprises 732 residues: NAD(P)H-quinone oxidoreductase subunit 5, chloroplastic (732 aa).

16 helical membrane-spanning segments follow: residues 9–29, 39–59, 89–109, 125–145, 147–167, 184–204, 215–235, 258–278, 291–311, 327–347, 353–373, 395–415, 420–440, 544–564, 604–624, and 712–732; these read WIVP…LLFF, ICAI…YNLS, IDPL…IVMI, FVYL…PNLI, IYIF…FWFT, IGDF…GSFE, LLIN…FLFL, TPIS…YLVA, MSVI…LAFF, LGYM…FHLI, KALL…IVGY, GTTF…ACFW, IIAD…LTAG, LIPL…GAPL, ISIA…ASIF, and SYLF…LLII.

It belongs to the complex I subunit 5 family. In terms of assembly, NDH is composed of at least 16 different subunits, 5 of which are encoded in the nucleus.

It localises to the plastid. It is found in the chloroplast thylakoid membrane. The catalysed reaction is a plastoquinone + NADH + (n+1) H(+)(in) = a plastoquinol + NAD(+) + n H(+)(out). It catalyses the reaction a plastoquinone + NADPH + (n+1) H(+)(in) = a plastoquinol + NADP(+) + n H(+)(out). In terms of biological role, NDH shuttles electrons from NAD(P)H:plastoquinone, via FMN and iron-sulfur (Fe-S) centers, to quinones in the photosynthetic chain and possibly in a chloroplast respiratory chain. The immediate electron acceptor for the enzyme in this species is believed to be plastoquinone. Couples the redox reaction to proton translocation, and thus conserves the redox energy in a proton gradient. In Anthoceros angustus (Hornwort), this protein is NAD(P)H-quinone oxidoreductase subunit 5, chloroplastic (ndhF).